The chain runs to 890 residues: Protein translocase subunit SecA (890 aa).

ATP contacts are provided by residues Gln86, 104–108 (GEGKT), and Asp493. Positions 851 to 872 (EASHGDGDAKKAPVVKKEESGR) are enriched in basic and acidic residues. The disordered stretch occupies residues 851-873 (EASHGDGDAKKAPVVKKEESGRN). 4 residues coordinate Zn(2+): Cys876, Cys878, Cys887, and Cys888.

The protein belongs to the SecA family. In terms of assembly, monomer and homodimer. Part of the essential Sec protein translocation apparatus which comprises SecA, SecYEG and auxiliary proteins SecDF. Other proteins may also be involved. Zn(2+) serves as cofactor.

It localises to the cell membrane. The protein localises to the cytoplasm. The enzyme catalyses ATP + H2O + cellular proteinSide 1 = ADP + phosphate + cellular proteinSide 2.. Its function is as follows. Part of the Sec protein translocase complex. Interacts with the SecYEG preprotein conducting channel. Has a central role in coupling the hydrolysis of ATP to the transfer of proteins into and across the cell membrane, serving as an ATP-driven molecular motor driving the stepwise translocation of polypeptide chains across the membrane. This chain is Protein translocase subunit SecA, found in Alkaliphilus oremlandii (strain OhILAs) (Clostridium oremlandii (strain OhILAs)).